A 385-amino-acid polypeptide reads, in one-letter code: Glycine/sarcosine/betaine reductase complex component C subunit alpha (385 aa).

The active site involves C359.

As to quaternary structure, heterooctamer of four alpha and four beta subunits. Component of the glycine, sarcosine and betaine reductase complexes, together with proteins A and B.

It carries out the reaction acetyl phosphate + [thioredoxin]-disulfide + NH4(+) + H2O = [thioredoxin]-dithiol + glycine + phosphate + H(+). The catalysed reaction is acetyl phosphate + methylamine + [thioredoxin]-disulfide + H2O = sarcosine + [thioredoxin]-dithiol + phosphate + H(+). The enzyme catalyses acetyl phosphate + trimethylamine + [thioredoxin]-disulfide + H2O = glycine betaine + [thioredoxin]-dithiol + phosphate + H(+). Functionally, in the first step of glycine, betaine and sarcosine reductases, the substrate is bound to component PB via a Schiff base intermediate. Then the PB-activated substrate is nucleophilically attacked by the selenol anion of component PA to transform it to a carboxymethylated selenoether and the respective amine. By action of component PC, acetyl phosphate is formed, leaving component PA in its oxidized state. Finally component PA becomes reduced by the thioredoxin system to start a new catalytic cycle of reductive deamination. This is Glycine/sarcosine/betaine reductase complex component C subunit alpha (grdD) from Peptoclostridium acidaminophilum (Eubacterium acidaminophilum).